A 289-amino-acid polypeptide reads, in one-letter code: 33 kDa chaperonin (289 aa).

2 cysteine pairs are disulfide-bonded: Cys230/Cys232 and Cys263/Cys266.

This sequence belongs to the HSP33 family. In terms of processing, under oxidizing conditions two disulfide bonds are formed involving the reactive cysteines. Under reducing conditions zinc is bound to the reactive cysteines and the protein is inactive.

The protein resides in the cytoplasm. Redox regulated molecular chaperone. Protects both thermally unfolding and oxidatively damaged proteins from irreversible aggregation. Plays an important role in the bacterial defense system toward oxidative stress. This Shigella flexneri serotype 5b (strain 8401) protein is 33 kDa chaperonin.